The following is a 296-amino-acid chain: Diaminopimelate epimerase (296 aa).

Asn11 and Asn78 together coordinate substrate. Cys87 functions as the Proton donor in the catalytic mechanism. Residues Gly88–Asn89, Asn167, Asn203, and Glu221–Arg222 each bind substrate. Cys230 serves as the catalytic Proton acceptor. Gly231–Thr232 contacts substrate.

Belongs to the diaminopimelate epimerase family. As to quaternary structure, homodimer.

The protein localises to the cytoplasm. It catalyses the reaction (2S,6S)-2,6-diaminopimelate = meso-2,6-diaminopimelate. It participates in amino-acid biosynthesis; L-lysine biosynthesis via DAP pathway; DL-2,6-diaminopimelate from LL-2,6-diaminopimelate: step 1/1. Its function is as follows. Catalyzes the stereoinversion of LL-2,6-diaminopimelate (L,L-DAP) to meso-diaminopimelate (meso-DAP), a precursor of L-lysine and an essential component of the bacterial peptidoglycan. This Mycobacterium leprae (strain Br4923) protein is Diaminopimelate epimerase.